A 434-amino-acid polypeptide reads, in one-letter code: Enolase (434 aa).

Substrate-binding residues include histidine 158 and glutamate 167. Glutamate 210 functions as the Proton donor in the catalytic mechanism. 3 residues coordinate Mg(2+): aspartate 245, glutamate 294, and aspartate 319. Glutamate 294 and aspartate 319 together coordinate substrate. The active-site Proton acceptor is lysine 344. Residues 371–374 (SHRS) and lysine 395 each bind substrate.

Belongs to the enolase family. As to quaternary structure, homodimer. Mg(2+) serves as cofactor.

The protein resides in the cytoplasm. It carries out the reaction (2R)-2-phosphoglycerate = phosphoenolpyruvate + H2O. Its pathway is carbohydrate degradation; glycolysis; pyruvate from D-glyceraldehyde 3-phosphate: step 4/5. The protein is Enolase (ENO) of Schistosoma mansoni (Blood fluke).